Reading from the N-terminus, the 442-residue chain is MAIHRTVLMCLGLPLFLLPGARAQEQAPPGCSPDLNPLYYNLCDRSEAWGIILEAVAGAGVVTTFVLTIILVASLPFVQDTKKRSLLGTQVFFLLGTLGLFCLVFACVVKPSFSTCASRRFLFGVLFAICFSCLVAHVLALHFLVRKNHGPRGWVIFLVALLLSLVEVIINTEWLIITLVRGAGTEGDALGNGSAGWVAVSPCAIANADFVMALIYVMLLLLCAFSGAWSALCGRFKRWRKHGVFILLTTTASIAVWVVWIVMYTYGNRQHNSPTWDDPTLAIALATNAWAFVLFYVIPEVSQVTRSSPEQSYQGDLYPTRGVGYETILKEQKGQSMFVENKAFSMDEPASAKRPVSPYSGYNGQLLTSMYQPTEMTLMHKAPSDGAYDVILPRATANSQVTGSANSTLRAEDIYAAQGRQEATLPKEGKNSQVFRNPYVWD.

A signal peptide spans 1–23 (MAIHRTVLMCLGLPLFLLPGARA). The Extracellular segment spans residues 24–50 (QEQAPPGCSPDLNPLYYNLCDRSEAWG). A helical transmembrane segment spans residues 51–71 (IILEAVAGAGVVTTFVLTIIL). Residues 72-85 (VASLPFVQDTKKRS) lie on the Cytoplasmic side of the membrane. The helical transmembrane segment at 86 to 106 (LLGTQVFFLLGTLGLFCLVFA) threads the bilayer. Topologically, residues 107–120 (CVVKPSFSTCASRR) are extracellular. The helical transmembrane segment at 121 to 141 (FLFGVLFAICFSCLVAHVLAL) threads the bilayer. The Cytoplasmic segment spans residues 142–155 (HFLVRKNHGPRGWV). Residues 156 to 176 (IFLVALLLSLVEVIINTEWLI) form a helical membrane-spanning segment. Residues 177–209 (ITLVRGAGTEGDALGNGSAGWVAVSPCAIANAD) are Extracellular-facing. N-linked (GlcNAc...) asparagine glycosylation is present at Asn-192. A helical transmembrane segment spans residues 210–230 (FVMALIYVMLLLLCAFSGAWS). The Cytoplasmic segment spans residues 231–242 (ALCGRFKRWRKH). Residues 243–263 (GVFILLTTTASIAVWVVWIVM) traverse the membrane as a helical segment. The Extracellular portion of the chain corresponds to 264 to 280 (YTYGNRQHNSPTWDDPT). The helical transmembrane segment at 281 to 301 (LAIALATNAWAFVLFYVIPEV) threads the bilayer. The Cytoplasmic segment spans residues 302-442 (SQVTRSSPEQ…QVFRNPYVWD (141 aa)). Ser-345, Ser-384, Ser-404, and Ser-407 each carry phosphoserine. The residue at position 415 (Tyr-415) is a Phosphotyrosine. A Phosphothreonine modification is found at Thr-424.

This sequence belongs to the G-protein coupled receptor 3 family.

The protein resides in the cell membrane. Functionally, this retinoic acid-inducible G-protein coupled receptor provide evidence for a possible interaction between retinoid and G-protein signaling pathways. This Bos taurus (Bovine) protein is G-protein coupled receptor family C group 5 member C (GPRC5C).